The sequence spans 122 residues: Small ribosomal subunit protein uS13 (122 aa).

The disordered stretch occupies residues 98 to 122 (VRGQRTKTNARTRKGKRKTVGAKAK).

This sequence belongs to the universal ribosomal protein uS13 family. In terms of assembly, part of the 30S ribosomal subunit. Forms a loose heterodimer with protein S19. Forms two bridges to the 50S subunit in the 70S ribosome.

Located at the top of the head of the 30S subunit, it contacts several helices of the 16S rRNA. In the 70S ribosome it contacts the 23S rRNA (bridge B1a) and protein L5 of the 50S subunit (bridge B1b), connecting the 2 subunits; these bridges are implicated in subunit movement. Contacts the tRNAs in the A and P-sites. The sequence is that of Small ribosomal subunit protein uS13 from Nautilia profundicola (strain ATCC BAA-1463 / DSM 18972 / AmH).